Consider the following 495-residue polypeptide: Maintenance of mitochondrial morphology protein 1 (495 aa).

The Lumenal portion of the chain corresponds to 1 to 22 (MALQQHEPAPFAPQSSLSFTQG). Residues 23 to 43 (FLLGQLSVVLLIGAFIKFFIF) traverse the membrane as a helical segment. Topologically, residues 44-495 (GEAPPPPSRG…PVGTPGIPDN (452 aa)) are cytoplasmic. Disordered regions lie at residues 63-94 (YSSV…PSTS), 269-320 (ASTE…SPKS), 382-428 (WPRM…EPEG), and 440-495 (GLGA…IPDN). Composition is skewed to polar residues over residues 65–74 (SVYSPPQDSQ) and 82–94 (STSN…PSTS). Residues 128-379 (QPESLDWFNV…EPRVQVVGLP (252 aa)) enclose the SMP-LTD domain. A compositionally biased stretch (pro residues) spans 271–289 (TEPPEPLQTPAGSPAPPTS). Over residues 418–428 (FSDDHGREPEG) the composition is skewed to basic and acidic residues. A compositionally biased stretch (polar residues) spans 458–469 (RSSSMTRQQSGG).

This sequence belongs to the MMM1 family. In terms of assembly, homodimer. Component of the ER-mitochondria encounter structure (ERMES) or MDM complex, composed of mmm1, mdm10, mdm12 and mdm34. An MMM1 homodimer associates with one molecule of mdm12 on each side in a pairwise head-to-tail manner, and the SMP-LTD domains of mmm1 and mdm12 generate a continuous hydrophobic tunnel for phospholipid trafficking.

The protein localises to the endoplasmic reticulum membrane. Component of the ERMES/MDM complex, which serves as a molecular tether to connect the endoplasmic reticulum (ER) and mitochondria. Components of this complex are involved in the control of mitochondrial shape and protein biogenesis, and function in nonvesicular lipid trafficking between the ER and mitochondria. The mdm12-mmm1 subcomplex functions in the major beta-barrel assembly pathway that is responsible for biogenesis of all outer membrane beta-barrel proteins, and acts in a late step after the SAM complex. The mdm10-mdm12-mmm1 subcomplex further acts in the TOM40-specific pathway after the action of the mdm12-mmm1 complex. Essential for establishing and maintaining the structure of mitochondria and maintenance of mtDNA nucleoids. This chain is Maintenance of mitochondrial morphology protein 1, found in Penicillium rubens (strain ATCC 28089 / DSM 1075 / NRRL 1951 / Wisconsin 54-1255) (Penicillium chrysogenum).